Here is a 157-residue protein sequence, read N- to C-terminus: Crossover junction endodeoxyribonuclease RuvC (157 aa).

Residues Asp7, Glu67, and Asp140 contribute to the active site. Mg(2+)-binding residues include Asp7, Glu67, and Asp140.

Belongs to the RuvC family. As to quaternary structure, homodimer which binds Holliday junction (HJ) DNA. The HJ becomes 2-fold symmetrical on binding to RuvC with unstacked arms; it has a different conformation from HJ DNA in complex with RuvA. In the full resolvosome a probable DNA-RuvA(4)-RuvB(12)-RuvC(2) complex forms which resolves the HJ. It depends on Mg(2+) as a cofactor.

It localises to the cytoplasm. It carries out the reaction Endonucleolytic cleavage at a junction such as a reciprocal single-stranded crossover between two homologous DNA duplexes (Holliday junction).. The RuvA-RuvB-RuvC complex processes Holliday junction (HJ) DNA during genetic recombination and DNA repair. Endonuclease that resolves HJ intermediates. Cleaves cruciform DNA by making single-stranded nicks across the HJ at symmetrical positions within the homologous arms, yielding a 5'-phosphate and a 3'-hydroxyl group; requires a central core of homology in the junction. The consensus cleavage sequence is 5'-(A/T)TT(C/G)-3'. Cleavage occurs on the 3'-side of the TT dinucleotide at the point of strand exchange. HJ branch migration catalyzed by RuvA-RuvB allows RuvC to scan DNA until it finds its consensus sequence, where it cleaves and resolves the cruciform DNA. This chain is Crossover junction endodeoxyribonuclease RuvC, found in Rickettsia rickettsii (strain Iowa).